We begin with the raw amino-acid sequence, 410 residues long: Serine hydroxymethyltransferase (410 aa).

(6S)-5,6,7,8-tetrahydrofolate is bound by residues Leu-116 and 120 to 122 (GHL). Lys-225 bears the N6-(pyridoxal phosphate)lysine mark.

This sequence belongs to the SHMT family. Homodimer. Pyridoxal 5'-phosphate is required as a cofactor.

It localises to the cytoplasm. It carries out the reaction (6R)-5,10-methylene-5,6,7,8-tetrahydrofolate + glycine + H2O = (6S)-5,6,7,8-tetrahydrofolate + L-serine. The protein operates within one-carbon metabolism; tetrahydrofolate interconversion. It participates in amino-acid biosynthesis; glycine biosynthesis; glycine from L-serine: step 1/1. In terms of biological role, catalyzes the reversible interconversion of serine and glycine with tetrahydrofolate (THF) serving as the one-carbon carrier. This reaction serves as the major source of one-carbon groups required for the biosynthesis of purines, thymidylate, methionine, and other important biomolecules. Also exhibits THF-independent aldolase activity toward beta-hydroxyamino acids, producing glycine and aldehydes, via a retro-aldol mechanism. This is Serine hydroxymethyltransferase from Lacticaseibacillus casei (strain BL23) (Lactobacillus casei).